Reading from the N-terminus, the 93-residue chain is Small ribosomal subunit protein uS19c (93 aa).

Belongs to the universal ribosomal protein uS19 family.

It is found in the plastid. Its subcellular location is the chloroplast. Functionally, protein S19 forms a complex with S13 that binds strongly to the 16S ribosomal RNA. In Ipomoea purpurea (Common morning glory), this protein is Small ribosomal subunit protein uS19c.